A 456-amino-acid polypeptide reads, in one-letter code: tRNA-2-methylthio-N(6)-dimethylallyladenosine synthase (456 aa).

The region spanning lysine 3 to alanine 120 is the MTTase N-terminal domain. [4Fe-4S] cluster-binding residues include cysteine 12, cysteine 49, cysteine 83, cysteine 157, cysteine 161, and cysteine 164. The Radical SAM core domain occupies arginine 143–arginine 377. Residues glutamine 380–methionine 447 form the TRAM domain.

It belongs to the methylthiotransferase family. MiaB subfamily. In terms of assembly, monomer. [4Fe-4S] cluster is required as a cofactor.

It localises to the cytoplasm. The enzyme catalyses N(6)-dimethylallyladenosine(37) in tRNA + (sulfur carrier)-SH + AH2 + 2 S-adenosyl-L-methionine = 2-methylsulfanyl-N(6)-dimethylallyladenosine(37) in tRNA + (sulfur carrier)-H + 5'-deoxyadenosine + L-methionine + A + S-adenosyl-L-homocysteine + 2 H(+). Catalyzes the methylthiolation of N6-(dimethylallyl)adenosine (i(6)A), leading to the formation of 2-methylthio-N6-(dimethylallyl)adenosine (ms(2)i(6)A) at position 37 in tRNAs that read codons beginning with uridine. The protein is tRNA-2-methylthio-N(6)-dimethylallyladenosine synthase of Paraburkholderia phymatum (strain DSM 17167 / CIP 108236 / LMG 21445 / STM815) (Burkholderia phymatum).